A 133-amino-acid chain; its full sequence is Holo-[acyl-carrier-protein] synthase (133 aa).

Mg(2+) is bound by residues Asp8 and Glu57.

It belongs to the P-Pant transferase superfamily. AcpS family. It depends on Mg(2+) as a cofactor.

The protein resides in the cytoplasm. The enzyme catalyses apo-[ACP] + CoA = holo-[ACP] + adenosine 3',5'-bisphosphate + H(+). Transfers the 4'-phosphopantetheine moiety from coenzyme A to a Ser of acyl-carrier-protein. The protein is Holo-[acyl-carrier-protein] synthase of Bartonella henselae (strain ATCC 49882 / DSM 28221 / CCUG 30454 / Houston 1) (Rochalimaea henselae).